The following is a 110-amino-acid chain: Small ribosomal subunit protein uS10 (110 aa).

It belongs to the universal ribosomal protein uS10 family. Part of the 30S ribosomal subunit.

In terms of biological role, involved in the binding of tRNA to the ribosomes. This chain is Small ribosomal subunit protein uS10, found in Ehrlichia ruminantium (strain Gardel).